The chain runs to 340 residues: Ribosomal RNA large subunit methyltransferase F (340 aa).

The tract at residues 1 to 36 is disordered; sequence MNAPRTPKPARKKPDSATPAKPVEPRKEASLHPRNR.

Belongs to the methyltransferase superfamily. METTL16/RlmF family.

It is found in the cytoplasm. The catalysed reaction is adenosine(1618) in 23S rRNA + S-adenosyl-L-methionine = N(6)-methyladenosine(1618) in 23S rRNA + S-adenosyl-L-homocysteine + H(+). Its function is as follows. Specifically methylates the adenine in position 1618 of 23S rRNA. This is Ribosomal RNA large subunit methyltransferase F from Pseudomonas fluorescens (strain Pf0-1).